The primary structure comprises 353 residues: Photosystem II protein D1 (353 aa).

Position 2 is an N-acetylthreonine (threonine 2). The residue at position 2 (threonine 2) is a Phosphothreonine. 3 consecutive transmembrane segments (helical) span residues 29-46 (YIGW…TATS), 118-133 (HFLL…EWEL), and 142-156 (WIAV…AATA). Residue histidine 118 coordinates chlorophyll a. Residue tyrosine 126 coordinates pheophytin a. Residues aspartate 170 and glutamate 189 each coordinate [CaMn4O5] cluster. The chain crosses the membrane as a helical span at residues 197-218 (FHMLGVAGVFGGSLFSAMHGSL). Residue histidine 198 coordinates chlorophyll a. A quinone contacts are provided by residues histidine 215 and 264 to 265 (SF). A Fe cation-binding site is contributed by histidine 215. Histidine 272 contributes to the Fe cation binding site. A helical membrane pass occupies residues 274-288 (FLAAWPVVGIWFTAL). [CaMn4O5] cluster is bound by residues histidine 332, glutamate 333, aspartate 342, and alanine 344. A propeptide spanning residues 345 to 353 (ALEVPSLNG) is cleaved from the precursor.

It belongs to the reaction center PufL/M/PsbA/D family. PSII is composed of 1 copy each of membrane proteins PsbA, PsbB, PsbC, PsbD, PsbE, PsbF, PsbH, PsbI, PsbJ, PsbK, PsbL, PsbM, PsbT, PsbX, PsbY, PsbZ, Psb30/Ycf12, at least 3 peripheral proteins of the oxygen-evolving complex and a large number of cofactors. It forms dimeric complexes. It depends on The D1/D2 heterodimer binds P680, chlorophylls that are the primary electron donor of PSII, and subsequent electron acceptors. It shares a non-heme iron and each subunit binds pheophytin, quinone, additional chlorophylls, carotenoids and lipids. D1 provides most of the ligands for the Mn4-Ca-O5 cluster of the oxygen-evolving complex (OEC). There is also a Cl(-1) ion associated with D1 and D2, which is required for oxygen evolution. The PSII complex binds additional chlorophylls, carotenoids and specific lipids. as a cofactor. In terms of processing, tyr-161 forms a radical intermediate that is referred to as redox-active TyrZ, YZ or Y-Z. C-terminally processed by CTPA; processing is essential to allow assembly of the oxygen-evolving complex and thus photosynthetic growth.

The protein resides in the plastid. It is found in the chloroplast thylakoid membrane. It catalyses the reaction 2 a plastoquinone + 4 hnu + 2 H2O = 2 a plastoquinol + O2. In terms of biological role, photosystem II (PSII) is a light-driven water:plastoquinone oxidoreductase that uses light energy to abstract electrons from H(2)O, generating O(2) and a proton gradient subsequently used for ATP formation. It consists of a core antenna complex that captures photons, and an electron transfer chain that converts photonic excitation into a charge separation. The D1/D2 (PsbA/PsbD) reaction center heterodimer binds P680, the primary electron donor of PSII as well as several subsequent electron acceptors. This Lolium perenne (Perennial ryegrass) protein is Photosystem II protein D1.